Here is a 279-residue protein sequence, read N- to C-terminus: MPEILEVVDVDGGPYGVTVDETGTLWFTLAARGAVGRLVDGTVETVALEPADGSPTVIMAEGDGAWFTEFRGNRIGRVEANGALSFLTAESPYGLCRAGDGGLWYTELSAGGVVHRAPDGTTTRHAVEGMPSMIAEAADGTVFVTLNQGNAVARITPDGQVRTTALPTAGAGPVGLATAADGAWFVELLAGQLGHVDRDGTVTEHPLPDRDARPHAVVVAPDGTVWFTEWAAARLGRRTADGEITELALPGAEPHGLAVAPDGTLWVAMESGALVHVRP.

A substrate-binding site is contributed by His-215. Glu-253 is a Mg(2+) binding site. His-255 functions as the Proton acceptor in the catalytic mechanism. Glu-270 contacts Mg(2+).

This sequence belongs to the Vgb family. In terms of assembly, monomer. The cofactor is Mg(2+).

Functionally, inactivates the type B streptogramin antibiotics by linearizing the lactone ring at the ester linkage, generating a free phenylglycine carboxylate and converting the threonyl moiety into 2-amino-butenoic acid. The protein is Virginiamycin B lyase of Nocardia farcinica (strain IFM 10152).